Here is a 155-residue protein sequence, read N- to C-terminus: Fibroblast growth factor 1 (155 aa).

A2 carries the N-acetylalanine modification. Residues K24–K27 carry the Nuclear localization signal motif. Residues K24 to L28 and I113 to K116 each bind heparin.

This sequence belongs to the heparin-binding growth factors family. As to quaternary structure, monomer. Homodimer. Interacts with FGFR1, FGFR2, FGFR3 and FGFR4. Affinity between fibroblast growth factors (FGFs) and their receptors is increased by heparan sulfate glycosaminoglycans that function as coreceptors. Found in a complex with FGFBP1, FGF1 and FGF2. Interacts with FGFBP1. Part of a Cu(2+)-dependent multiprotein aggregate containing FGF1, S100A13 and SYT1. Interacts with S100A13. Interacts with FGFBP1. Interacts with LRRC59. Interacts with CSNKA, CSNKB and FIBP. While binding with LRRC59, CSNKA and FIBP seem mutually exclusive, CSNKB and FIBP may cooperatively interact with FGF1. Interacts with SYT1. Forms a ternary complex with FGFR1 and ITGAV:ITGB3 and induces the recruitment of PTPN11 to the complex. Post-translationally, in the nucleus, phosphorylated by PKC/PRKCD.

It localises to the secreted. The protein resides in the cytoplasm. Its subcellular location is the cell cortex. It is found in the cytosol. The protein localises to the nucleus. Plays an important role in the regulation of cell survival, cell division, angiogenesis, cell differentiation and cell migration. Functions as a potent mitogen in vitro. Acts as a ligand for FGFR1 and integrins. Binds to FGFR1 in the presence of heparin leading to FGFR1 dimerization and activation via sequential autophosphorylation on tyrosine residues which act as docking sites for interacting proteins, leading to the activation of several signaling cascades. Binds to integrin ITGAV:ITGB3. Its binding to integrin, subsequent ternary complex formation with integrin and FGFR1, and the recruitment of PTPN11 to the complex are essential for FGF1 signaling. Induces the phosphorylation and activation of FGFR1, FRS2, MAPK3/ERK1, MAPK1/ERK2 and AKT1. Can induce angiogenesis. In Bos taurus (Bovine), this protein is Fibroblast growth factor 1 (FGF1).